The chain runs to 626 residues: 1-deoxy-D-xylulose-5-phosphate synthase 2 (626 aa).

Thiamine diphosphate-binding positions include histidine 74 and 115-117; that span reads GHA. Residue aspartate 146 participates in Mg(2+) binding. Residues 147–148, asparagine 175, phenylalanine 286, and glutamate 368 each bind thiamine diphosphate; that span reads GS. Asparagine 175 serves as a coordination point for Mg(2+).

The protein belongs to the transketolase family. DXPS subfamily. In terms of assembly, homodimer. Mg(2+) is required as a cofactor. It depends on thiamine diphosphate as a cofactor.

The enzyme catalyses D-glyceraldehyde 3-phosphate + pyruvate + H(+) = 1-deoxy-D-xylulose 5-phosphate + CO2. The protein operates within metabolic intermediate biosynthesis; 1-deoxy-D-xylulose 5-phosphate biosynthesis; 1-deoxy-D-xylulose 5-phosphate from D-glyceraldehyde 3-phosphate and pyruvate: step 1/1. In terms of biological role, catalyzes the acyloin condensation reaction between C atoms 2 and 3 of pyruvate and glyceraldehyde 3-phosphate to yield 1-deoxy-D-xylulose-5-phosphate (DXP). This is 1-deoxy-D-xylulose-5-phosphate synthase 2 from Geobacter sulfurreducens (strain ATCC 51573 / DSM 12127 / PCA).